A 131-amino-acid chain; its full sequence is MRLDILLFTLSSSTSLALSYSLPMDPAHSSVHTLSAADRHIGERVTRQRHLREEPANEARNYSDLAVEIKRLVEELDSRVLEQADISLLDRHYAGDYKAFRSDLMTYGYQTRFAEQYKLFKKLGIDFKHNY.

The first 19 residues, 1 to 19 (MRLDILLFTLSSSTSLALS), serve as a signal peptide directing secretion. Residues 49 to 60 (RHLREEPANEAR) carry the RxLR-dEER motif. N-linked (GlcNAc...) asparagine glycosylation is present at Asn-61.

This sequence belongs to the RxLR effector family.

Its subcellular location is the secreted. The protein localises to the host cell. Its function is as follows. Secreted effector that suppresses callose deposition, a hallmark of pathogen-associated molecular pattern (PAMP)-triggered immunity (PTI) and renders host plants more susceptible to bacterial infection. Reduces host plant responsiveness to salicylic acid (SA) in haustoriated cells into which host-translocated effectors are delivered. The chain is RxLR effector protein 62 from Hyaloperonospora arabidopsidis (strain Emoy2) (Downy mildew agent).